A 215-amino-acid chain; its full sequence is Ion-translocating oxidoreductase complex subunit G (215 aa).

A helical membrane pass occupies residues 9-29 (GLILSLFAIITSGLIALTYFG). T176 carries the post-translational modification FMN phosphoryl threonine.

This sequence belongs to the RnfG family. As to quaternary structure, the complex is composed of six subunits: RnfA, RnfB, RnfC, RnfD, RnfE and RnfG. It depends on FMN as a cofactor.

Its subcellular location is the cell inner membrane. Part of a membrane-bound complex that couples electron transfer with translocation of ions across the membrane. The sequence is that of Ion-translocating oxidoreductase complex subunit G from Pseudoalteromonas atlantica (strain T6c / ATCC BAA-1087).